Here is a 206-residue protein sequence, read N- to C-terminus: Large ribosomal subunit protein eL13x (206 aa).

Residues 186 to 206 (NARHAGARAKRAAEAEKEEKK) form a disordered region. The span at 196 to 206 (RAAEAEKEEKK) shows a compositional bias: basic and acidic residues.

Belongs to the eukaryotic ribosomal protein eL13 family.

This Arabidopsis thaliana (Mouse-ear cress) protein is Large ribosomal subunit protein eL13x (RPL13D).